Consider the following 217-residue polypeptide: Fucoxanthin-chlorophyll a-c binding protein B, chloroplastic (217 aa).

Residues 1–39 (MKSAVMAVACAAAPGFRGPSAFNGAALTTSAKACSAMKM) constitute a chloroplast transit peptide. 3 helical membrane-spanning segments follow: residues 81–101 (IAMLAIAGHLTQQNTRLPGML), 122–142 (IPPAGLAQIFAFIGFLELAVM), and 183–203 (GRAAQMGILALMVHEELNNKP).

Belongs to the fucoxanthin chlorophyll protein family. In terms of assembly, the LHC complex of chromophytic algae is composed of fucoxanthin, chlorophyll A and C bound non-covalently by fucoxanthin chlorophyll proteins (FCPs). The ratio of pigments in this LHC is; fucoxanthin: chlorophyll C: chlorophyll A; (0.6-1): (0.1-0.3): (1).

The protein resides in the plastid. Its subcellular location is the chloroplast thylakoid membrane. Its function is as follows. The light-harvesting complex (LHC) functions as a light receptor, it captures and delivers excitation energy to photosystems with which it is closely associated. Energy is transferred from the carotenoid and chlorophyll C (or B) to chlorophyll A and the photosynthetic reaction centers where it is used to synthesize ATP and reducing power. The sequence is that of Fucoxanthin-chlorophyll a-c binding protein B, chloroplastic (FCPB) from Macrocystis pyrifera (Giant kelp).